The following is a 263-amino-acid chain: Endonuclease 8 (263 aa).

Residue P2 is the Schiff-base intermediate with DNA of the active site. E3 serves as the catalytic Proton donor. K53 functions as the Proton donor; for beta-elimination activity in the catalytic mechanism. The DNA site is built by Q70, R125, and N169. The segment at 229 to 263 adopts an FPG-type zinc-finger fold; it reads KVFHRDGELCERCGGIIEKTTLSSRPFYWCPGCQH. R253 functions as the Proton donor; for delta-elimination activity in the catalytic mechanism.

This sequence belongs to the FPG family. Zn(2+) serves as cofactor.

The enzyme catalyses 2'-deoxyribonucleotide-(2'-deoxyribose 5'-phosphate)-2'-deoxyribonucleotide-DNA = a 3'-end 2'-deoxyribonucleotide-(2,3-dehydro-2,3-deoxyribose 5'-phosphate)-DNA + a 5'-end 5'-phospho-2'-deoxyribonucleoside-DNA + H(+). Functionally, involved in base excision repair of DNA damaged by oxidation or by mutagenic agents. Acts as a DNA glycosylase that recognizes and removes damaged bases. Has a preference for oxidized pyrimidines, such as thymine glycol, 5,6-dihydrouracil and 5,6-dihydrothymine. Has AP (apurinic/apyrimidinic) lyase activity and introduces nicks in the DNA strand. Cleaves the DNA backbone by beta-delta elimination to generate a single-strand break at the site of the removed base with both 3'- and 5'-phosphates. In Escherichia coli (strain SE11), this protein is Endonuclease 8.